The following is a 279-amino-acid chain: Thymidylate synthase (279 aa).

A dUMP-binding site is contributed by 141–142 (RR). C161 (nucleophile) is an active-site residue. DUMP-binding positions include 181–184 (RSND), N192, and 222–224 (HVY). D184 is a (6R)-5,10-methylene-5,6,7,8-tetrahydrofolate binding site. Residue A278 coordinates (6R)-5,10-methylene-5,6,7,8-tetrahydrofolate.

Belongs to the thymidylate synthase family. Bacterial-type ThyA subfamily. In terms of assembly, homodimer.

It is found in the cytoplasm. It carries out the reaction dUMP + (6R)-5,10-methylene-5,6,7,8-tetrahydrofolate = 7,8-dihydrofolate + dTMP. It functions in the pathway pyrimidine metabolism; dTTP biosynthesis. Its function is as follows. Catalyzes the reductive methylation of 2'-deoxyuridine-5'-monophosphate (dUMP) to 2'-deoxythymidine-5'-monophosphate (dTMP) while utilizing 5,10-methylenetetrahydrofolate (mTHF) as the methyl donor and reductant in the reaction, yielding dihydrofolate (DHF) as a by-product. This enzymatic reaction provides an intracellular de novo source of dTMP, an essential precursor for DNA biosynthesis. This chain is Thymidylate synthase, found in Bacillus subtilis subsp. natto.